The primary structure comprises 156 residues: Small ribosomal subunit protein uS7 (156 aa).

It belongs to the universal ribosomal protein uS7 family. In terms of assembly, part of the 30S ribosomal subunit. Contacts proteins S9 and S11.

Functionally, one of the primary rRNA binding proteins, it binds directly to 16S rRNA where it nucleates assembly of the head domain of the 30S subunit. Is located at the subunit interface close to the decoding center, probably blocks exit of the E-site tRNA. This Syntrophus aciditrophicus (strain SB) protein is Small ribosomal subunit protein uS7.